The chain runs to 486 residues: Glutamyl-tRNA(Gln) amidotransferase subunit A (486 aa).

Residues K74 and S149 each act as charge relay system in the active site. Residue S173 is the Acyl-ester intermediate of the active site.

This sequence belongs to the amidase family. GatA subfamily. As to quaternary structure, heterotrimer of A, B and C subunits.

It carries out the reaction L-glutamyl-tRNA(Gln) + L-glutamine + ATP + H2O = L-glutaminyl-tRNA(Gln) + L-glutamate + ADP + phosphate + H(+). Allows the formation of correctly charged Gln-tRNA(Gln) through the transamidation of misacylated Glu-tRNA(Gln) in organisms which lack glutaminyl-tRNA synthetase. The reaction takes place in the presence of glutamine and ATP through an activated gamma-phospho-Glu-tRNA(Gln). The sequence is that of Glutamyl-tRNA(Gln) amidotransferase subunit A from Prochlorococcus marinus (strain MIT 9303).